A 171-amino-acid chain; its full sequence is Cardioactive peptide (171 aa).

An N-terminal signal peptide occupies residues 1–26 (MQMYHVVLGCSLAILLVILDIPQASC). A propeptide spanning residues 27 to 49 (DDVVIQKRQVDPAEMDRLLDPKR) is cleaved from the precursor. Residues Cys54 and Cys60 are joined by a disulfide bond. Cys60 carries the post-translational modification Cysteine amide. Residues 64–171 (RSDESMGTLV…QEEITKPWSR (108 aa)) constitute a propeptide that is removed on maturation. The tract at residues 116–171 (QSNQFGAGMDRPLPLPIAGYRRKRFADPESQAPAPHSNLPRATSQLQEEITKPWSR) is disordered.

Central nervous system; most neurons exhibit coexpression with burs.

Its subcellular location is the secreted. Its function is as follows. Cardioregulatory neurohormone that increases heart beat rate during adult wing inflation; has no effect on beat amplitude. The effect of CCAP is both ino- and chronotropic. The chain is Cardioactive peptide from Periplaneta americana (American cockroach).